The chain runs to 364 residues: D-alanine--D-alanine ligase (364 aa).

The 207-residue stretch at 140-346 folds into the ATP-grasp domain; the sequence is KKLALLEGIP…YSQLIDKLIS (207 aa). 173–228 lines the ATP pocket; it reads ESEFSYPVFVKPANSGSSVGISKAKDREDLVLAIHEAFLYDTKILIEQAINAREIE. Mg(2+) contacts are provided by D299, E313, and N315.

This sequence belongs to the D-alanine--D-alanine ligase family. It depends on Mg(2+) as a cofactor. The cofactor is Mn(2+).

The protein localises to the cytoplasm. The enzyme catalyses 2 D-alanine + ATP = D-alanyl-D-alanine + ADP + phosphate + H(+). The protein operates within cell wall biogenesis; peptidoglycan biosynthesis. In terms of biological role, cell wall formation. The sequence is that of D-alanine--D-alanine ligase from Caldicellulosiruptor bescii (strain ATCC BAA-1888 / DSM 6725 / KCTC 15123 / Z-1320) (Anaerocellum thermophilum).